The following is a 730-amino-acid chain: Phosphoribosylformylglycinamidine synthase subunit PurL (730 aa).

H44 is an active-site residue. ATP-binding residues include Y47 and K86. Mg(2+) is bound at residue E88. Substrate contacts are provided by residues 89–92 and R111; that span reads SHNH. H90 functions as the Proton acceptor in the catalytic mechanism. D112 is a Mg(2+) binding site. Substrate is bound at residue Q235. D263 contacts Mg(2+). 307–309 is a substrate binding site; it reads ESQ. N489 and G526 together coordinate ATP. N527 contacts Mg(2+). A substrate-binding site is contributed by S529.

It belongs to the FGAMS family. Monomer. Part of the FGAM synthase complex composed of 1 PurL, 1 PurQ and 2 PurS subunits.

The protein resides in the cytoplasm. It catalyses the reaction N(2)-formyl-N(1)-(5-phospho-beta-D-ribosyl)glycinamide + L-glutamine + ATP + H2O = 2-formamido-N(1)-(5-O-phospho-beta-D-ribosyl)acetamidine + L-glutamate + ADP + phosphate + H(+). It participates in purine metabolism; IMP biosynthesis via de novo pathway; 5-amino-1-(5-phospho-D-ribosyl)imidazole from N(2)-formyl-N(1)-(5-phospho-D-ribosyl)glycinamide: step 1/2. In terms of biological role, part of the phosphoribosylformylglycinamidine synthase complex involved in the purines biosynthetic pathway. Catalyzes the ATP-dependent conversion of formylglycinamide ribonucleotide (FGAR) and glutamine to yield formylglycinamidine ribonucleotide (FGAM) and glutamate. The FGAM synthase complex is composed of three subunits. PurQ produces an ammonia molecule by converting glutamine to glutamate. PurL transfers the ammonia molecule to FGAR to form FGAM in an ATP-dependent manner. PurS interacts with PurQ and PurL and is thought to assist in the transfer of the ammonia molecule from PurQ to PurL. The chain is Phosphoribosylformylglycinamidine synthase subunit PurL from Pelagibacter ubique (strain HTCC1062).